Here is a 324-residue protein sequence, read N- to C-terminus: uncharacterized protein (324 aa).

The next 9 membrane-spanning stretches (helical) occupy residues 34 to 54 (MAVL…FYVL), 76 to 96 (VFMA…NVGL), 103 to 123 (IYQM…TTLL), 127 to 147 (IGQL…IVGY), 158 to 178 (PILG…QFTI), 198 to 218 (GTYG…FIGS), 243 to 263 (YVIS…GLAI), 275 to 295 (LDIA…MESF), and 297 to 317 (LLQF…HSII).

It localises to the membrane. This is an uncharacterized protein from Schizosaccharomyces pombe (strain 972 / ATCC 24843) (Fission yeast).